Reading from the N-terminus, the 831-residue chain is Thymine dioxygenase JBP1-B (831 aa).

The thymine dioxygenase stretch occupies residues 80–282 (VVGGVLLPGA…RLTCVCYYRA (203 aa)). Fe cation is bound by residues His-207, Asp-209, and His-257. Arg-273 serves as a coordination point for 2-oxoglutarate. The DNA-binding JBP1 domain stretch occupies residues 409-578 (LGGALKAAEE…IEEARRRGNA (170 aa)).

It belongs to the TET family. JBP1 subfamily. Monomer. Binds to DNA as a monomer. Fe(2+) is required as a cofactor.

Its subcellular location is the nucleus. It catalyses the reaction thymine + 2-oxoglutarate + O2 = 5-hydroxymethyluracil + succinate + CO2. Functionally, dioxygenase that catalyzes the first step of DNA base J (beta-d-glucosyl-HOMedU) biosynthesis by converting thymine to 5-hydroxymethyluracil (HOMedU). DNA base J is a hypermodified thymidine residue found in the genome of kinetoplastid parasites, which is localized primarily to repetitive DNA, namely the telomeres, and is implicated in the regulation of antigenic variation. Also specifically binds to base J-containing DNA (J-DNA). Involved in propagation and maintenance of DNA base J synthesis initiated by JBP2 by specifically binding already synthesized DNA base J and propagating J synthesis. Thymine dioxygenase activity and J-DNA-binding are independent functions. The sequence is that of Thymine dioxygenase JBP1-B (JBP1B) from Trypanosoma cruzi (strain CL Brener).